Here is a 515-residue protein sequence, read N- to C-terminus: GMP synthase [glutamine-hydrolyzing] (515 aa).

Positions 10-200 (TIIVLDFGSQ…VFGVCGCSEG (191 aa)) constitute a Glutamine amidotransferase type-1 domain. Cysteine 87 acts as the Nucleophile in catalysis. Catalysis depends on residues histidine 174 and glutamate 176. The region spanning 201-390 (WNMENFIEVE…LGIPDEIVWR (190 aa)) is the GMPS ATP-PPase domain. 228–234 (SGGVDSS) lines the ATP pocket.

As to quaternary structure, homodimer.

It catalyses the reaction XMP + L-glutamine + ATP + H2O = GMP + L-glutamate + AMP + diphosphate + 2 H(+). Its pathway is purine metabolism; GMP biosynthesis; GMP from XMP (L-Gln route): step 1/1. In terms of biological role, catalyzes the synthesis of GMP from XMP. The polypeptide is GMP synthase [glutamine-hydrolyzing] (Bacillus anthracis (strain A0248)).